Reading from the N-terminus, the 353-residue chain is Phospho-N-acetylmuramoyl-pentapeptide-transferase (353 aa).

10 consecutive transmembrane segments (helical) span residues 24–44 (LGFFIAFFLTLFLMPKFILWA), 66–86 (TPTMGGIVFVFATIVASVLCA), 88–108 (LSNLYVLLGIIVLVGFSFVGF), 129–149 (FGMLFILSLIVSVLLSLKGLD), 160–180 (PLFEMPTMLAVGFWVLVFLST), 192–212 (GLASVPSIFTLLSLSIFVYVA), 229–249 (VGELFVISLALVGSLFGFLWY), 256–276 (VFMGDSGSLAIGGFIAYNAIV), 281–301 (ILLVLMGSIFVIETLSVILQV), and 330–350 (KVIVRFWIISMLSNLVALLSL).

This sequence belongs to the glycosyltransferase 4 family. MraY subfamily. Mg(2+) serves as cofactor.

The protein resides in the cell inner membrane. The catalysed reaction is UDP-N-acetyl-alpha-D-muramoyl-L-alanyl-gamma-D-glutamyl-meso-2,6-diaminopimeloyl-D-alanyl-D-alanine + di-trans,octa-cis-undecaprenyl phosphate = di-trans,octa-cis-undecaprenyl diphospho-N-acetyl-alpha-D-muramoyl-L-alanyl-D-glutamyl-meso-2,6-diaminopimeloyl-D-alanyl-D-alanine + UMP. It participates in cell wall biogenesis; peptidoglycan biosynthesis. Its function is as follows. Catalyzes the initial step of the lipid cycle reactions in the biosynthesis of the cell wall peptidoglycan: transfers peptidoglycan precursor phospho-MurNAc-pentapeptide from UDP-MurNAc-pentapeptide onto the lipid carrier undecaprenyl phosphate, yielding undecaprenyl-pyrophosphoryl-MurNAc-pentapeptide, known as lipid I. This chain is Phospho-N-acetylmuramoyl-pentapeptide-transferase, found in Helicobacter pylori (strain J99 / ATCC 700824) (Campylobacter pylori J99).